Consider the following 122-residue polypeptide: Phospholipase A2 crotoxin basic subunit CBd (122 aa).

Disulfide bonds link cysteine 26–cysteine 115, cysteine 28–cysteine 44, cysteine 43–cysteine 95, cysteine 49–cysteine 122, cysteine 50–cysteine 88, cysteine 57–cysteine 81, and cysteine 75–cysteine 86. 3 residues coordinate Ca(2+): tyrosine 27, glycine 29, and glycine 31. Histidine 47 is a catalytic residue. Aspartate 48 provides a ligand contact to Ca(2+). Aspartate 89 is an active-site residue.

The protein belongs to the phospholipase A2 family. Group II subfamily. D49 sub-subfamily. As to quaternary structure, heterodimer of one of the acidic (CA1, CA2, CA3 or CA4) and one of the basic (CBa1, CBa2, CBb, CBc or CBd) subunits; non-covalently linked. The acidic subunit is non-toxic, without enzymatic activity and comprises 3 peptides that are cross-linked by 5 disulfide bridges. The basic subunit is toxic, has phospholipase A2 activity and is composed of a single chain. Multiple variants of each subunit give different crotoxin complexes that can be subdivided into 2 classes: (1) those of high toxicity, low PLA2 activity (CBb, CBc and CBd linked with high affinity to any CA) and high stability (K(d)=4.5 nM) and (2) those of moderate toxicity, high PLA2 activity (CBa2 linked with low affinity to any CA) and low stability (K(d)=25 nM). Interacts with crotoxin inhibitor from Crotalus serum (CICS); the interaction leads to dissociation of the CA-CB heterodimer and to inhibition of PLA2 activity of the CB subunit. Interacts with human NBD1 domain of CFTR. Requires Ca(2+) as cofactor. As to expression, expressed by the venom gland.

It localises to the secreted. It catalyses the reaction a 1,2-diacyl-sn-glycero-3-phosphocholine + H2O = a 1-acyl-sn-glycero-3-phosphocholine + a fatty acid + H(+). Functionally, heterodimer CA-CB: Crotoxin is a potent presynaptic neurotoxin that possesses phospholipase A2 (PLA2) activity and exerts a lethal action by blocking neuromuscular transmission. It consists of a non-covalent association of a basic and weakly toxic PLA2 subunit (CBa2, CBb, CBc, or CBd), with a small acidic, non-enzymatic and non-toxic subunit (CA1, CA2, CA3 or CA4). The complex acts by binding to a specific 48-kDa protein (R48) receptor located on presynaptic membranes, forming a transient ternary complex CA-CB-R48, followed by dissociation of the CA-CB complex and release of the CA subunit. At equilibrium, only the CB subunits remain associated with the specific crotoxin receptor. In addition to neurotoxicity, crotoxin has been found to exert myotoxicity, nephrotoxicity, and cardiovascular toxicity. Moreover, anti-inflammatory, immunomodulatory, anti-tumor and analgesic effects of crotoxin have also been reported. Its function is as follows. Monomer CBd: The basic subunit of crotoxin is a snake venom phospholipase A2 (PLA2) that exhibits weak neurotoxicity (10-fold less than the heterodimer) and very strong anticoagulant effects by binding to factor Xa (F10) and inhibiting the prothrombinase activity. In addition, it shows the same effects described for the heterodimer and binds the nucleotide-binding domain (NBD1) of CFTR chloride channels and increases the channel current. PLA2 catalyzes the calcium-dependent hydrolysis of the 2-acyl groups in 3-sn-phosphoglycerides. This is Phospholipase A2 crotoxin basic subunit CBd from Crotalus durissus terrificus (South American rattlesnake).